Reading from the N-terminus, the 129-residue chain is Ubiquinol-cytochrome-c reductase complex assembly factor 2 (129 aa).

The N-terminal 13 residues, Met1–Cys13, are a transit peptide targeting the mitochondrion.

It localises to the mitochondrion matrix. The protein resides in the mitochondrion nucleoid. Its subcellular location is the mitochondrion. Functionally, required for the assembly of the ubiquinol-cytochrome c reductase complex (mitochondrial respiratory chain complex III or cytochrome b-c1 complex). May play a role in the modulation of respiratory chain activities such as oxygen consumption and ATP production. May be involved in cytochrome b translation and/or stability. The polypeptide is Ubiquinol-cytochrome-c reductase complex assembly factor 2 (uqcc2) (Danio rerio (Zebrafish)).